Reading from the N-terminus, the 340-residue chain is tRNA N6-adenosine threonylcarbamoyltransferase (340 aa).

Residues H111 and H115 each contribute to the Fe cation site. Substrate-binding positions include 133–137 (VVSGG), D166, G179, D183, and N274. Residue D299 participates in Fe cation binding.

It belongs to the KAE1 / TsaD family. The cofactor is Fe(2+).

It localises to the cytoplasm. The catalysed reaction is L-threonylcarbamoyladenylate + adenosine(37) in tRNA = N(6)-L-threonylcarbamoyladenosine(37) in tRNA + AMP + H(+). Required for the formation of a threonylcarbamoyl group on adenosine at position 37 (t(6)A37) in tRNAs that read codons beginning with adenine. Is involved in the transfer of the threonylcarbamoyl moiety of threonylcarbamoyl-AMP (TC-AMP) to the N6 group of A37, together with TsaE and TsaB. TsaD likely plays a direct catalytic role in this reaction. This is tRNA N6-adenosine threonylcarbamoyltransferase from Brachyspira hyodysenteriae (strain ATCC 49526 / WA1).